The sequence spans 173 residues: Tumor necrosis factor ligand superfamily member 18 (173 aa).

The Cytoplasmic portion of the chain corresponds to 1-20 (MEEMPLRESSPQRAERCKKS). Residues 21-41 (WLLCIVALLLMLLCSLGTLIY) traverse the membrane as a helical; Signal-anchor for type II membrane protein segment. Positions 40-166 (IYTSLKPTAI…TNTYWGIILM (127 aa)) constitute a THD domain. Residues 42–173 (TSLKPTAIES…ILMPDLPFIS (132 aa)) are Extracellular-facing. A disulfide bond links Cys-52 and Cys-72. Asn-74 carries an N-linked (GlcNAc...) asparagine glycan.

Belongs to the tumor necrosis factor family. Homotrimer. Homodimer. In terms of processing, N-glycosylated. In terms of tissue distribution, detected in immature and mature dendritic cells and in macrophages (at protein level). Detected in spleen, lung, heart, thymus, monocytes, macrophages, B-cells and dendritic cells.

Its subcellular location is the cell membrane. Cytokine that binds to TNFRSF18/AITR/GITR. Regulates T-cell responses. Can function as costimulator and lower the threshold for T-cell activation and T-cell proliferation. Important for interactions between activated T-lymphocytes and endothelial cells. Mediates activation of NF-kappa-B. Triggers increased phosphorylation of STAT1 and up-regulates expression of VCAM1 and ICAM1. Promotes leukocyte adhesion to endothelial cells. Regulates migration of monocytes from the splenic reservoir to sites of inflammation. This chain is Tumor necrosis factor ligand superfamily member 18 (Tnfsf18), found in Mus musculus (Mouse).